A 378-amino-acid chain; its full sequence is Glutamate 5-kinase (378 aa).

Lysine 19 contributes to the ATP binding site. Substrate is bound by residues serine 60, aspartate 147, and asparagine 159. ATP contacts are provided by residues 179-180 (SD) and 221-227 (SGGMRTK). Residues 285-362 (KGTLTIDAGA…GEMEQLLGYR (78 aa)) form the PUA domain.

It belongs to the glutamate 5-kinase family.

It localises to the cytoplasm. The enzyme catalyses L-glutamate + ATP = L-glutamyl 5-phosphate + ADP. It functions in the pathway amino-acid biosynthesis; L-proline biosynthesis; L-glutamate 5-semialdehyde from L-glutamate: step 1/2. Catalyzes the transfer of a phosphate group to glutamate to form L-glutamate 5-phosphate. The polypeptide is Glutamate 5-kinase (Gluconobacter oxydans (strain 621H) (Gluconobacter suboxydans)).